Reading from the N-terminus, the 346-residue chain is Phosphate acyltransferase (346 aa).

The protein belongs to the PlsX family. In terms of assembly, homodimer. Probably interacts with PlsY.

Its subcellular location is the cytoplasm. It carries out the reaction a fatty acyl-[ACP] + phosphate = an acyl phosphate + holo-[ACP]. It functions in the pathway lipid metabolism; phospholipid metabolism. Its function is as follows. Catalyzes the reversible formation of acyl-phosphate (acyl-PO(4)) from acyl-[acyl-carrier-protein] (acyl-ACP). This enzyme utilizes acyl-ACP as fatty acyl donor, but not acyl-CoA. This chain is Phosphate acyltransferase, found in Psychromonas ingrahamii (strain DSM 17664 / CCUG 51855 / 37).